The sequence spans 193 residues: Peptidyl-tRNA hydrolase (193 aa).

Position 16 (Tyr16) interacts with tRNA. His21 serves as the catalytic Proton acceptor. TRNA-binding residues include Phe66, Asn68, and Asn114.

Belongs to the PTH family. Monomer.

The protein localises to the cytoplasm. It carries out the reaction an N-acyl-L-alpha-aminoacyl-tRNA + H2O = an N-acyl-L-amino acid + a tRNA + H(+). Functionally, hydrolyzes ribosome-free peptidyl-tRNAs (with 1 or more amino acids incorporated), which drop off the ribosome during protein synthesis, or as a result of ribosome stalling. In terms of biological role, catalyzes the release of premature peptidyl moieties from peptidyl-tRNA molecules trapped in stalled 50S ribosomal subunits, and thus maintains levels of free tRNAs and 50S ribosomes. The sequence is that of Peptidyl-tRNA hydrolase from Pelobacter propionicus (strain DSM 2379 / NBRC 103807 / OttBd1).